The following is a 111-amino-acid chain: MKHYEVVLMIHPDQSDQLDAMLGKYRGIIEEKGGKIHRFEDWGRRQLAYPIEKLHKAHYVLFNIECPTESLEKLQESLRYNDAILRRLVIATKEAITEPSVMMESNEKEVI.

The protein belongs to the bacterial ribosomal protein bS6 family.

In terms of biological role, binds together with bS18 to 16S ribosomal RNA. This Francisella tularensis subsp. tularensis (strain FSC 198) protein is Small ribosomal subunit protein bS6.